Reading from the N-terminus, the 66-residue chain is uncharacterized protein (66 aa).

Helical transmembrane passes span 3 to 23 and 34 to 54; these read LIHVLAALPFIGILLGIPFAN and FILAYIVMWALLTSALMAIVY.

Its subcellular location is the cell membrane. This is an uncharacterized protein from Bacillus subtilis (strain 168).